Consider the following 261-residue polypeptide: Hemin import ATP-binding protein HmuV (261 aa).

In terms of domain architecture, ABC transporter spans 7 to 243 (LRGQNLSLQF…EIIDAVYGYK (237 aa)). Residue 39 to 46 (GPNGAGKS) participates in ATP binding.

This sequence belongs to the ABC transporter superfamily. Heme (hemin) importer (TC 3.A.1.14.5) family. As to quaternary structure, the complex is composed of two ATP-binding proteins (HmuV), two transmembrane proteins (HmuU) and a solute-binding protein (HmuT).

It is found in the cell inner membrane. In terms of biological role, part of the ABC transporter complex HmuTUV involved in hemin import. Responsible for energy coupling to the transport system. In Vibrio vulnificus (strain YJ016), this protein is Hemin import ATP-binding protein HmuV.